A 162-amino-acid polypeptide reads, in one-letter code: Neuritin-like protein (162 aa).

The first 32 residues, 1-32, serve as a signal peptide directing secretion; sequence MMCNCCHCHWRRRCQRLPCALTLLLLLPLAVA. A lipid anchor (GPI-anchor amidated alanine) is attached at A136. Residues 137–162 constitute a propeptide, removed in mature form; sequence PALAPAPAPVLLAAALALACLLGPLA.

This sequence belongs to the neuritin family.

Its subcellular location is the cell membrane. This Mus musculus (Mouse) protein is Neuritin-like protein (Nrn1l).